A 413-amino-acid chain; its full sequence is Phosphopentomutase (413 aa).

Mn(2+) contacts are provided by aspartate 11, aspartate 306, histidine 311, aspartate 347, histidine 348, and histidine 359.

Belongs to the phosphopentomutase family. It depends on Mn(2+) as a cofactor.

The protein resides in the cytoplasm. It catalyses the reaction 2-deoxy-alpha-D-ribose 1-phosphate = 2-deoxy-D-ribose 5-phosphate. The enzyme catalyses alpha-D-ribose 1-phosphate = D-ribose 5-phosphate. Its pathway is carbohydrate degradation; 2-deoxy-D-ribose 1-phosphate degradation; D-glyceraldehyde 3-phosphate and acetaldehyde from 2-deoxy-alpha-D-ribose 1-phosphate: step 1/2. Isomerase that catalyzes the conversion of deoxy-ribose 1-phosphate (dRib-1-P) and ribose 1-phosphate (Rib-1-P) to deoxy-ribose 5-phosphate (dRib-5-P) and ribose 5-phosphate (Rib-5-P), respectively. The protein is Phosphopentomutase of Helicobacter pylori (strain J99 / ATCC 700824) (Campylobacter pylori J99).